We begin with the raw amino-acid sequence, 315 residues long: Zinc finger protein 691 (315 aa).

The span at 1 to 10 (MSLCSPTHSA) shows a compositional bias: polar residues. A disordered region spans residues 1–90 (MSLCSPTHSA…QETHPKKPWQ (90 aa)). Residues 33 to 58 (GSEKEQSPEPHLPEEGEGGKPWRVDD) show a composition bias toward basic and acidic residues. Residues S39, S75, and S77 each carry the phosphoserine modification. K113 is covalently cross-linked (Glycyl lysine isopeptide (Lys-Gly) (interchain with G-Cter in SUMO2)). C2H2-type zinc fingers lie at residues 115-137 (FICAQCGKTFNNTSNLRTHQRIH), 143-165 (YKCSECGKSFSRSSNRIRHERIH), 171-193 (YKCPKCQESFRRRSDLTTHQQDH), 199-221 (YRCDICGKSFSQSATLAVHHRTH), 227-249 (YICCECGKSFSNSSSFGVHHRTH), 255-277 (YECTECGRTFSDISNFGAHQRTH), and 283-305 (YRCTVCGKHFSRSSNLIRHQKTH).

This sequence belongs to the krueppel C2H2-type zinc-finger protein family.

The protein resides in the nucleus. In terms of biological role, may be involved in transcriptional regulation. This is Zinc finger protein 691 (ZNF691) from Homo sapiens (Human).